Consider the following 334-residue polypeptide: Methionine adenosyltransferase 2 subunit beta (334 aa).

Residues 37 to 40, 60 to 62, 71 to 72, C93, R97, Y159, and L185 contribute to the NADP(+) site; these read TGLL, FRR, and NL. A Phosphothreonine modification is found at T309. Residues 319–334 form a required for interaction with MAT2A region; the sequence is LWPFLIDKRWRQTVFH.

This sequence belongs to the dTDP-4-dehydrorhamnose reductase family. MAT2B subfamily. As to quaternary structure, heterotrimer; composed of a catalytic MAT2A homodimer that binds one regulatory MAT2B chain. Heterohexamer; composed of a central, catalytic MAT2A homotetramer flanked on either side by a regulatory MAT2B chain. NADP binding increases the affinity for MAT2A.

It participates in amino-acid biosynthesis; S-adenosyl-L-methionine biosynthesis; S-adenosyl-L-methionine from L-methionine: step 1/1. Functionally, regulatory subunit of S-adenosylmethionine synthetase 2, an enzyme that catalyzes the formation of S-adenosylmethionine from methionine and ATP. Regulates MAT2A catalytic activity by changing its kinetic properties, increasing its affinity for L-methionine. Can bind NADP (in vitro). This is Methionine adenosyltransferase 2 subunit beta (MAT2B) from Pongo abelii (Sumatran orangutan).